Here is a 768-residue protein sequence, read N- to C-terminus: DNA replication licensing factor MCM3 homolog 2 (768 aa).

The MCM domain occupies 290–497 (TFDLLGNSLA…IDRQISEHVA (208 aa)). 340-347 (GDPSVAKS) serves as a coordination point for ATP. Residues 472–475 (SRFD) carry the Arginine finger motif. Basic and acidic residues predominate over residues 661-670 (EMKQQADHDA). Residues 661–689 (EMKQQADHDAGATGGTVDGHGSSGNDPMD) are disordered. Gly residues predominate over residues 672–682 (ATGGTVDGHGS).

It belongs to the MCM family.

Its subcellular location is the nucleus. The enzyme catalyses ATP + H2O = ADP + phosphate + H(+). Acts as a factor that allows the DNA to undergo a single round of replication per cell cycle. Required for DNA replication and cell proliferation. May act as a component of the MCM complex which is the putative replicative helicase of the replication licensing system in eukaryotic cells. The protein is DNA replication licensing factor MCM3 homolog 2 (ROA2) of Zea mays (Maize).